We begin with the raw amino-acid sequence, 323 residues long: NADH-ubiquinone oxidoreductase chain 1 (323 aa).

The next 8 membrane-spanning stretches (helical) occupy residues 4 to 24 (LFTV…VAFL), 73 to 93 (YLFF…WNLM), 106 to 126 (LLLV…SGWA), 150 to 170 (LALI…TYIM), 175 to 195 (FSWF…STLA), 226 to 246 (LFFI…VVIF), 256 to 276 (LFPL…FLFL), and 303 to 323 (IGAL…LPLF).

Belongs to the complex I subunit 1 family.

It localises to the mitochondrion inner membrane. It carries out the reaction a ubiquinone + NADH + 5 H(+)(in) = a ubiquinol + NAD(+) + 4 H(+)(out). Functionally, core subunit of the mitochondrial membrane respiratory chain NADH dehydrogenase (Complex I) that is believed to belong to the minimal assembly required for catalysis. Complex I functions in the transfer of electrons from NADH to the respiratory chain. The immediate electron acceptor for the enzyme is believed to be ubiquinone. This Paracentrotus lividus (Common sea urchin) protein is NADH-ubiquinone oxidoreductase chain 1 (ND1).